The sequence spans 196 residues: Riboflavin transporter RibU (196 aa).

The next 5 helical transmembrane spans lie at 14–34, 46–66, 80–100, 120–140, and 164–184; these read LIAI…VPII, IVPV…WVIL, VNTY…ITVL, LISS…FVAI, and MVLP…MIIL.

This sequence belongs to the prokaryotic riboflavin transporter (P-RFT) (TC 2.A.87) family. In terms of assembly, in E.coli forms a stable energy-coupling factor (ECF) transporter complex probably composed of a membrane-embedded substrate-binding protein (S component), 2 ATP-binding proteins (A components) and 2 transmembrane proteins (T component). May be able to interact with more than 1 S component at a time.

The protein localises to the cell membrane. Functionally, probable riboflavin-binding protein that interacts with the energy-coupling factor (ECF) ABC-transporter complex. Unlike classic ABC transporters this ECF transporter provides the energy necessary to transport a number of different substrates. The substrates themselves are bound by transmembrane, not extracytoplasmic soluble proteins and transport it into cells. In Leuconostoc mesenteroides subsp. mesenteroides (strain ATCC 8293 / DSM 20343 / BCRC 11652 / CCM 1803 / JCM 6124 / NCDO 523 / NBRC 100496 / NCIMB 8023 / NCTC 12954 / NRRL B-1118 / 37Y), this protein is Riboflavin transporter RibU (ribU).